The chain runs to 269 residues: Aegyptin-like protein (269 aa).

A signal peptide spans 1-19 (MKLLLLLASVLCLALIVSA). The tract at residues 19–152 (ARPSDETTDQ…GGAEGGEESP (134 aa)) is disordered. The segment at 38 to 148 (TSDSYHQEED…AGEEGGAEGG (111 aa)) is GE-rich region which mediates binding of Ca(2+). Composition is skewed to acidic residues over residues 56 to 73 (GTED…ESSS), 98 to 121 (GEED…EGGA), and 131 to 149 (GGAD…EGGE). A mediates binding of host collagen and inhibition of platelet aggregation region spans residues 148 to 269 (GEESPVNTYH…DCIVEKRDSE (122 aa)). 2 disulfides stabilise this stretch: cysteine 208–cysteine 261 and cysteine 230–cysteine 239.

This sequence belongs to the aegyptin family. As to expression, female saliva (at protein level). Distal lateral lobes of female salivary gland (at protein level). Low-level expression in male salivary gland. Not detected in female and male carcasses.

Its subcellular location is the secreted. Its function is as follows. Modulates blood feeding of female mosquitoes on vertebrate hosts. Inhibits collagen-induced platelet aggregation in the host via preventing collagen interaction with its ligands: glycoprotein VI and integrin alpha-2/beta-1 (ITGA2/ITGB1). Inhibits collagen-induced increase of Ca(2+) levels in host platelets. Binds to host collagens. Binds Ca(2+). Prevents a decrease in platelet count in the host blood after collagen injection. In terms of biological role, (Microbial infection) Does not affect the development of Plasmodium berghei parasites in mosquitoes. The protein is Aegyptin-like protein of Anopheles stephensi (Indo-Pakistan malaria mosquito).